The following is a 64-amino-acid chain: MIDQKLLSILVCPVSKAPLEFVADKQELVCAASGLAYPIRDGIPVMLETEARELTLEEKEQYSH.

Belongs to the UPF0434 family.

The sequence is that of UPF0434 protein TERTU_2813 from Teredinibacter turnerae (strain ATCC 39867 / T7901).